Consider the following 129-residue polypeptide: Small ribosomal subunit protein uS11 (129 aa).

Belongs to the universal ribosomal protein uS11 family. As to quaternary structure, part of the 30S ribosomal subunit. Interacts with proteins S7 and S18. Binds to IF-3.

Its function is as follows. Located on the platform of the 30S subunit, it bridges several disparate RNA helices of the 16S rRNA. Forms part of the Shine-Dalgarno cleft in the 70S ribosome. The polypeptide is Small ribosomal subunit protein uS11 (Parvibaculum lavamentivorans (strain DS-1 / DSM 13023 / NCIMB 13966)).